The following is a 1406-amino-acid chain: Protein FAM135B (1406 aa).

Disordered stretches follow at residues 519 to 548 (WTGQ…DGQA) and 770 to 820 (SVSA…GDSG). Residues Ser-777 and Ser-778 each carry the phosphoserine modification. Polar residues predominate over residues 804 to 816 (KSQGSPGSCSQLC).

This sequence belongs to the FAM135 family.

The polypeptide is Protein FAM135B (FAM135B) (Homo sapiens (Human)).